A 457-amino-acid chain; its full sequence is Cysteine--tRNA ligase (457 aa).

Zn(2+) is bound at residue Cys28. Positions 30–40 (MTVYDLCHIGH) match the 'HIGH' region motif. Residues Cys209, His234, and Glu238 each contribute to the Zn(2+) site. The 'KMSKS' region motif lies at 266-270 (KMSKS). Residue Lys269 coordinates ATP.

The protein belongs to the class-I aminoacyl-tRNA synthetase family. As to quaternary structure, monomer. The cofactor is Zn(2+).

Its subcellular location is the cytoplasm. It catalyses the reaction tRNA(Cys) + L-cysteine + ATP = L-cysteinyl-tRNA(Cys) + AMP + diphosphate. The chain is Cysteine--tRNA ligase from Chromobacterium violaceum (strain ATCC 12472 / DSM 30191 / JCM 1249 / CCUG 213 / NBRC 12614 / NCIMB 9131 / NCTC 9757 / MK).